The primary structure comprises 219 residues: Uracil-DNA glycosylase (219 aa).

Residue D61 is the Proton acceptor of the active site.

This sequence belongs to the uracil-DNA glycosylase (UDG) superfamily. UNG family.

It is found in the cytoplasm. It catalyses the reaction Hydrolyzes single-stranded DNA or mismatched double-stranded DNA and polynucleotides, releasing free uracil.. In terms of biological role, excises uracil residues from the DNA which can arise as a result of misincorporation of dUMP residues by DNA polymerase or due to deamination of cytosine. In Neisseria meningitidis serogroup A / serotype 4A (strain DSM 15465 / Z2491), this protein is Uracil-DNA glycosylase.